Here is a 631-residue protein sequence, read N- to C-terminus: Sperm-associated antigen 16 protein (631 aa).

Residues 152 to 267 are a coiled coil; sequence DVYTQIMLLE…LQETLKKLQR (116 aa). Residues 266-332 form a disordered region; sequence QRGHSYHGPQ…QPNPNLNVSK (67 aa). Composition is skewed to basic and acidic residues over residues 277-287 and 295-304; these read KVDHSREKENA and GLREAREQNK. 7 WD repeats span residues 350–389, 392–431, 434–473, 476–515, 518–557, 560–600, and 601–630; these read LHEL…VLLT, GHTD…CILT, GHSR…CRCT, GHTD…CEQS, GHMH…PIVS, IGPS…HKLM, and GHEN…VRTW.

Interacts with SPAG6 and STK36. Phosphorylated by TSSK2. In terms of tissue distribution, isoform 1 is detected in testis. Isoform 4 is detected in testis and brain, and at lower levels in kidney, heart, pancreas, thyroid, ovary, adrenal gland, spinal cord, trachea and liver.

The protein resides in the cytoplasm. It is found in the cytoskeleton. It localises to the flagellum axoneme. Its subcellular location is the cilium axoneme. The protein localises to the cell projection. The protein resides in the cilium. It is found in the flagellum. In terms of biological role, necessary for sperm flagellar function. Plays a role in motile ciliogenesis. May help to recruit STK36 to the cilium or apical surface of the cell to initiate subsequent steps of construction of the central pair apparatus of motile cilia. This chain is Sperm-associated antigen 16 protein (SPAG16), found in Homo sapiens (Human).